We begin with the raw amino-acid sequence, 2035 residues long: Host cell factor 1 (2035 aa).

N-acetylalanine is present on alanine 2. Serine 6 is subject to Phosphoserine. 5 Kelch repeats span residues 44 to 89, 93 to 140, 148 to 194, 217 to 265, and 266 to 313; these read LIVV…GFVC, RLLV…RLGH, KCYL…ITYG, KLVI…TIGN, and KMYV…LMDT. Glycyl lysine isopeptide (Lys-Gly) (interchain with G-Cter in ubiquitin) cross-links involve residues lysine 105, lysine 163, and lysine 244. Lysine 282 participates in a covalent cross-link: Glycyl lysine isopeptide (Lys-Gly) (interchain with G-Cter in SUMO2). Lysine 288 bears the N6-acetyllysine mark. A Glycyl lysine isopeptide (Lys-Gly) (interchain with G-Cter in ubiquitin) cross-link involves residue lysine 363. The Fibronectin type-III 1 domain occupies 366-466; the sequence is PPARVQLVRA…TTTTIQVLPT (101 aa). A disordered region spans residues 407 to 434; sequence ATATSPTPNPVPSVPANPPKSPAPAAAA. Serine 411 carries the post-translational modification Phosphoserine. The segment covering 413–428 has biased composition (pro residues); sequence TPNPVPSVPANPPKSP. Residues 500–550 form a required for interaction with OGT region; the sequence is LVTMRPASQAGKAPVTVTSLPAGVRMVVPTQSAQGTVIGSSPQMSGMAALA. Omega-N-methylarginine occurs at positions 504 and 524. Serine 598, serine 666, and serine 669 each carry phosphoserine. Positions 610-722 are interaction with SIN3A; the sequence is LKTAAAQVGT…KGPLPAGTIL (113 aa). An interaction with ZBTB17 region spans residues 750–902; the sequence is ILGISSVSPS…SLAGAGGHST (153 aa). Residue lysine 813 is modified to N6-acetyllysine. The interaction with GABP2 stretch occupies residues 813–912; it reads KIITAVPKIA…SASLATPITT (100 aa). HCF repeat repeat units follow at residues 1010-1035, 1072-1097, and 1101-1126; these read TLVC…TVVA, VRVC…ATSN, and QHGC…AMSS. The stretch at 1158–1183 is one HCF repeat 4; degenerate repeat; that stretch reads AAQGSKSQCQTRQTSATSTTMTVMAT. Phosphoserine is present on serine 1205. Arginine 1219 is modified (omega-N-methylarginine). Serine 1224 carries the phosphoserine modification. 2 HCF repeat repeats span residues 1286–1311 and 1314–1339; these read TQVC…SNAG and QRVC…ATSN. Disordered regions lie at residues 1292–1371, 1435–1470, and 1487–1515; these read PPCE…TMSV, TVTS…TSSS, and VTQS…QQLP. Composition is skewed to low complexity over residues 1299–1312, 1329–1339, and 1362–1371; these read TGTT…NAGS, TTHTATTATSN, and TTSTGTTMSV. The stretch at 1349 to 1374 is one HCF repeat 7; degenerate repeat; it reads QQPPAGRPCETHQTTSTGTTMSVSVG. An HCF repeat 8 repeat occupies 1414–1439; the sequence is QRVCSNPPCETHETGTTHTATTVTSN. Threonine 1491 is subject to Phosphothreonine. The segment covering 1493–1502 has biased composition (pro residues); the sequence is VPGPSVPPPE. Residues serine 1497, serine 1507, and serine 1771 each carry the phosphoserine modification. Fibronectin type-III domains follow at residues 1797-1888 and 1890-2006; these read LPPP…TCLP and FPGA…TSKD. Glycyl lysine isopeptide (Lys-Gly) (interchain with G-Cter in ubiquitin) cross-links involve residues lysine 1807 and lysine 1808. Serine 1838 bears the Phosphoserine mark. Residues 1994–2035 form a disordered region; the sequence is ATQVRWLQETSKDSSGTKPANKRPMSSPEMKSAPKKSKADGQ. Position 2005 is an N6-acetyllysine (lysine 2005). Lysine 2024 participates in a covalent cross-link: Glycyl lysine isopeptide (Lys-Gly) (interchain with G-Cter in SUMO2).

In terms of assembly, composed predominantly of six polypeptides ranging from 110 to 150 kDa and a minor 300 kDa polypeptide. The majority of N- and C-terminal cleavage products remain tightly, albeit non-covalently, associated. Interacts with POU2F1, CREB3, ZBTB17, EGR2, E2F4, CREBZF, SP1, GABP2, Sin3 HDAC complex (SIN3A, HDAC1, HDAC2, SUDS3), SAP30, SIN3B and FHL2. Component of a MLL1 complex, composed of at least the core components KMT2A/MLL1, ASH2L, HCFC1, WDR5 and RBBP5, as well as the facultative components BACC1, CHD8, DPY30, E2F6, HCFC2, HSP70, INO80C, KANSL1, LAS1L, MAX, MCRS1, MEN1, MGA, KAT8, PELP1, PHF20, PRP31, RING2, RUVBL1, RUVBL2, SENP3, TAF1, TAF4, TAF6, TAF7, TAF9 and TEX10. Component of a THAP1/THAP3-HCFC1-OGT complex that is required for the regulation of the transcriptional activity of RRM1. Interacts directly with THAP3 (via its HBM). Interacts (via the Kelch-repeat domain) with THAP1 (via the HBM); the interaction recruits HCHC1 to the RRM1. Interacts with THAP7 and THAP11 (via the HMB). Interacts directly with OGT; the interaction, which requires the HCFC1 cleavage site domain, glycosylates and promotes the proteolytic processing of HCFC1, retains OGT in the nucleus and impacts the expression of herpes simplex virus immediate early viral genes. Component of the SET1 complex, at least composed of the catalytic subunit (SETD1A or SETD1B), WDR5, WDR82, RBBP5, ASH2L, CXXC1, HCFC1 and DPY30. Component of the NSL complex at least composed of MOF/KAT8, KANSL1, KANSL2, KANSL3, MCRS1, PHF20, OGT1/OGT, WDR5 and HCFC1. Component of a complex at least composed of ZNF335, HCFC1, CCAR2, EMSY, MKI67, RBBP5, ASH2L and WDR5; the complex is formed as a result of interactions between components of a nuclear receptor-mediated transcription complex and a histone methylation complex. Within the complex interacts with ZNF335. Interacts with TET2 and TET3. Interacts with HCFC1R1. Interacts with THAP11. Interacts (via Kelch domain) with KMT2E/MLL5 isoform 3 (via HBM motif). Interacts with E2F1. Accessory scaffold component of the polycomb repressive deubiquitinase (PR-DUB) complex, at least composed of BAP1, one of ASXL1, ASXL2 or (probably) ASXL3 and one of MBD5 or MBD6; the PR-DUB core associates with a number of accessory proteins, including FOXK1, FOXK2, KDM1B, HCFC1, YY1 and OGT. Interacts with YY1 (via Gly-rich region); the interaction is direct. Interacts with BAP1 (via HBM-like motif). As to quaternary structure, (Microbial infection) Associates with the VP16-induced complex; binding to HCFC1 activates the viral transcriptional activator VP16 for association with POU2F1, to form a multiprotein-DNA complex responsible for activating transcription of the viral immediate early genes. Interacts with the viral transactivator protein VP16. Post-translationally, proteolytically cleaved at one or several PPCE--THET sites within the HCF repeats. Further cleavage of the primary N- and C-terminal chains results in a 'trimming' and accumulation of the smaller chains. Cleavage is promoted by O-glycosylation. In terms of processing, O-glycosylated. GlcNAcylation by OGT promotes proteolytic processing. Ubiquitinated. Lys-1807 and Lys-1808 are ubiquitinated both via 'Lys-48'- and 'Lys-63'-linked polyubiquitin chains. BAP1 mediated deubiquitination of 'Lys-48'-linked polyubiquitin chains; deubiquitination by BAP1 does not seem to stabilize the protein. In terms of tissue distribution, highly expressed in fetal tissues and the adult kidney. Present in all tissues tested.

The protein localises to the cytoplasm. It is found in the nucleus. Its function is as follows. Transcriptional coregulator. Serves as a scaffold protein, bridging interactions between transcription factors, including THAP11 and ZNF143, and transcriptional coregulators. Involved in control of the cell cycle. Also antagonizes transactivation by ZBTB17 and GABP2; represses ZBTB17 activation of the p15(INK4b) promoter and inhibits its ability to recruit p300. Coactivator for EGR2 and GABP2. Tethers the chromatin modifying Set1/Ash2 histone H3 'Lys-4' methyltransferase (H3K4me) and Sin3 histone deacetylase (HDAC) complexes (involved in the activation and repression of transcription, respectively) together. Component of a THAP1/THAP3-HCFC1-OGT complex that is required for the regulation of the transcriptional activity of RRM1. As part of the NSL complex it may be involved in acetylation of nucleosomal histone H4 on several lysine residues. Recruits KMT2E/MLL5 to E2F1 responsive promoters promoting transcriptional activation and thereby facilitates G1 to S phase transition. Modulates expression of homeobox protein PDX1, perhaps acting in concert with transcription factor E2F1, thereby regulating pancreatic beta-cell growth and glucose-stimulated insulin secretion. May negatively modulate transcriptional activity of FOXO3. (Microbial infection) In case of human herpes simplex virus (HSV) infection, HCFC1 forms a multiprotein-DNA complex with the viral transactivator protein VP16 and POU2F1 thereby enabling the transcription of the viral immediate early genes. The polypeptide is Host cell factor 1 (Homo sapiens (Human)).